Reading from the N-terminus, the 234-residue chain is Leucyl/phenylalanyl-tRNA--protein transferase (234 aa).

This sequence belongs to the L/F-transferase family.

It is found in the cytoplasm. The enzyme catalyses N-terminal L-lysyl-[protein] + L-leucyl-tRNA(Leu) = N-terminal L-leucyl-L-lysyl-[protein] + tRNA(Leu) + H(+). It catalyses the reaction N-terminal L-arginyl-[protein] + L-leucyl-tRNA(Leu) = N-terminal L-leucyl-L-arginyl-[protein] + tRNA(Leu) + H(+). The catalysed reaction is L-phenylalanyl-tRNA(Phe) + an N-terminal L-alpha-aminoacyl-[protein] = an N-terminal L-phenylalanyl-L-alpha-aminoacyl-[protein] + tRNA(Phe). Its function is as follows. Functions in the N-end rule pathway of protein degradation where it conjugates Leu, Phe and, less efficiently, Met from aminoacyl-tRNAs to the N-termini of proteins containing an N-terminal arginine or lysine. The chain is Leucyl/phenylalanyl-tRNA--protein transferase from Escherichia coli O45:K1 (strain S88 / ExPEC).